The following is a 360-amino-acid chain: Phospho-N-acetylmuramoyl-pentapeptide-transferase (360 aa).

The next 10 helical transmembrane spans lie at 25–45, 74–94, 97–117, 132–152, 168–188, 199–219, 236–256, 263–283, 288–308, and 338–358; these read RGIL…PWLI, MGGA…ADLA, YVWV…VDDY, WKYF…YMTA, IEIP…VGSS, GLAI…CYLS, SGEL…FLWF, VFMG…IAVI, VVLF…MIQV, and VIVR…ATLK.

Belongs to the glycosyltransferase 4 family. MraY subfamily. The cofactor is Mg(2+).

The protein localises to the cell inner membrane. It carries out the reaction UDP-N-acetyl-alpha-D-muramoyl-L-alanyl-gamma-D-glutamyl-meso-2,6-diaminopimeloyl-D-alanyl-D-alanine + di-trans,octa-cis-undecaprenyl phosphate = di-trans,octa-cis-undecaprenyl diphospho-N-acetyl-alpha-D-muramoyl-L-alanyl-D-glutamyl-meso-2,6-diaminopimeloyl-D-alanyl-D-alanine + UMP. The protein operates within cell wall biogenesis; peptidoglycan biosynthesis. Catalyzes the initial step of the lipid cycle reactions in the biosynthesis of the cell wall peptidoglycan: transfers peptidoglycan precursor phospho-MurNAc-pentapeptide from UDP-MurNAc-pentapeptide onto the lipid carrier undecaprenyl phosphate, yielding undecaprenyl-pyrophosphoryl-MurNAc-pentapeptide, known as lipid I. The sequence is that of Phospho-N-acetylmuramoyl-pentapeptide-transferase from Stutzerimonas stutzeri (strain A1501) (Pseudomonas stutzeri).